The following is a 568-amino-acid chain: MARVEL domain-containing protein 2 (568 aa).

Disordered regions lie at residues 1–72 and 116–163; these read MSGG…YPSD and SGGV…SYNS. At 1–211 the chain is on the cytoplasmic side; sequence MSGGGSSSGP…YMKSWAGLLR (211 aa). Basic and acidic residues predominate over residues 29–46; the sequence is ADPRHPETNLETLHDRDL. The span at 52-62 shows a compositional bias: pro residues; sequence PLPPPPLPLHP. Residues 205–379 enclose the MARVEL domain; that stretch reads SWAGLLRILC…SAMVSLKLWR (175 aa). The helical transmembrane segment at 212–232 threads the bilayer; the sequence is ILCIVELLLGAAVFACVTAYI. Residues 233–266 lie on the Extracellular side of the membrane; it reads HKDNEWYNMFGYSQPYGYTASMQGGYYYSGPKTP. A helical transmembrane segment spans residues 267 to 287; sequence FVLVVAGLAWIVTIILLVLGM. Residues 288-303 are Cytoplasmic-facing; it reads SMYYRTILLDSTWWPL. The helical transmembrane segment at 304–324 threads the bilayer; the sequence is TEFGINISLFILYMAGAIVYV. The Extracellular portion of the chain corresponds to 325–354; that stretch reads NDTNRGGLCYYQLFNTPVNASFCRVEGGQT. The chain crosses the membrane as a helical span at residues 355-375; that stretch reads AAIIFLFVSMLMYFISAMVSL. At 376-568 the chain is on the cytoplasmic side; that stretch reads KLWRHESARK…KVMDWNDGYN (193 aa). In terms of domain architecture, OCEL spans 451-562; that stretch reads PDYVAKYQAI…RIQEYDKVMD (112 aa). The stretch at 462-559 forms a coiled coil; it reads AEDERERYKA…IKQRIQEYDK (98 aa).

Belongs to the ELL/occludin family.

It is found in the cell membrane. The protein localises to the cell junction. The protein resides in the tight junction. In terms of biological role, may play a role in the formation of the epithelial barrier. This chain is MARVEL domain-containing protein 2 (marveld2), found in Xenopus tropicalis (Western clawed frog).